We begin with the raw amino-acid sequence, 558 residues long: GPI mannosyltransferase 3 (558 aa).

Transmembrane regions (helical) follow at residues 53 to 73 (GLRSVFFPAVVALPFYLLKLL), 81 to 101 (VWFAPRVLQALVLTLIDVSVF), 164 to 184 (AYCGVRLYGNVIEALLVLLTL), and 190 to 210 (VPFLLLTGLASAIRVTSAVVL). The N-linked (GlcNAc...) asparagine glycan is linked to Asn-220. The chain crosses the membrane as a helical span at residues 234–254 (IVLTGLIVLVAVLGGVMVLDY). Asn-275 carries an N-linked (GlcNAc...) asparagine glycan. A run of 4 helical transmembrane segments spans residues 292-312 (VLVGIVGPHVLFTIAAPLVLW), 323-343 (PVLGMLGIGAWTLGFYSLIDH), 348-368 (FVFVVIPLSLITAAFVLVRWS), and 372-392 (AVVVKMNRLFVLFNIVMIYLM).

This sequence belongs to the glycosyltransferase 22 family. PIGB subfamily.

Its subcellular location is the endoplasmic reticulum membrane. The protein operates within glycolipid biosynthesis; glycosylphosphatidylinositol-anchor biosynthesis. Its function is as follows. Mannosyltransferase involved in glycosylphosphatidylinositol-anchor biosynthesis. Transfers the third alpha-1,2-mannose to Man2-GlcN-acyl-PI during GPI precursor assembly. The protein is GPI mannosyltransferase 3 (GPI10) of Trypanosoma brucei brucei (strain 927/4 GUTat10.1).